The following is a 137-amino-acid chain: Small ribosomal subunit protein uS12 (137 aa).

The interval 33-57 (KVQTNVSSPQKRGVATRVGTMTPKK) is disordered. Aspartate 102 carries the post-translational modification 3-methylthioaspartic acid.

This sequence belongs to the universal ribosomal protein uS12 family. Part of the 30S ribosomal subunit. Contacts proteins S8 and S17. May interact with IF1 in the 30S initiation complex.

Its function is as follows. With S4 and S5 plays an important role in translational accuracy. In terms of biological role, interacts with and stabilizes bases of the 16S rRNA that are involved in tRNA selection in the A site and with the mRNA backbone. Located at the interface of the 30S and 50S subunits, it traverses the body of the 30S subunit contacting proteins on the other side and probably holding the rRNA structure together. The combined cluster of proteins S8, S12 and S17 appears to hold together the shoulder and platform of the 30S subunit. In Streptococcus thermophilus (strain CNRZ 1066), this protein is Small ribosomal subunit protein uS12.